The primary structure comprises 906 residues: Protein translocase subunit SecA (906 aa).

Residues Gln89, 107-111 (GEGKT), and Asp502 each bind ATP. The disordered stretch occupies residues 868–887 (VPPAQRDPADPRTWGKVSRN). Positions 890, 892, 901, and 902 each coordinate Zn(2+).

The protein belongs to the SecA family. As to quaternary structure, monomer and homodimer. Part of the essential Sec protein translocation apparatus which comprises SecA, SecYEG and auxiliary proteins SecDF-YajC and YidC. Requires Zn(2+) as cofactor.

The protein resides in the cell inner membrane. The protein localises to the cytoplasm. The catalysed reaction is ATP + H2O + cellular proteinSide 1 = ADP + phosphate + cellular proteinSide 2.. Functionally, part of the Sec protein translocase complex. Interacts with the SecYEG preprotein conducting channel. Has a central role in coupling the hydrolysis of ATP to the transfer of proteins into and across the cell membrane, serving both as a receptor for the preprotein-SecB complex and as an ATP-driven molecular motor driving the stepwise translocation of polypeptide chains across the membrane. The protein is Protein translocase subunit SecA of Brucella melitensis biotype 1 (strain ATCC 23456 / CCUG 17765 / NCTC 10094 / 16M).